Reading from the N-terminus, the 339-residue chain is Type IV secretion system protein PtlH homolog (339 aa).

It belongs to the GSP E family.

The polypeptide is Type IV secretion system protein PtlH homolog (ptlH) (Bordetella parapertussis (strain 12822 / ATCC BAA-587 / NCTC 13253)).